Consider the following 485-residue polypeptide: MALKSSKAVSEEQHGYEFFGPPGAFAISFLLPVLVYVFNFVCNDISGCPAPSLLSPKTLSLDKLKQEVGWPQDGFAGLVSWEASAATAGYILLSLILYRVLPAHEVEGTELRSGGRLKYRLNTLYSSSFTLAILAAGTAAQGAEFPVWTFISDNFIQILTANTIFSYAVATFVYVRSFSVKPGNKENRELAAGGHTGNMLYDWFIGRELNPRVVIPLIGEVDLKEWLELRPGMMGWIIFNCSWCAQQYRNYGYVTDSSICITLVQAVYVFDSWWNEPAILTTMDITTDGFGMMLAFGDIVWVPFVYSLQTRYLAVHPVSLGPVGLAVMLSLIGLGFYIFRSANSEKNNFRTNPNDPKVSQLKYIQTKKGSKLLISGWWGIARHINYLGDWIQSWPYCLPTGLAGYQILNAGAQAEGALVMRDGREVVQGEAKGWGMLITYFYILYFAILLIHRERRDDDKCHRKYGEDWEKYRKIVRYRIIPGIY.

A run of 5 helical transmembrane segments spans residues 18–38 (FFGP…VYVF), 77–97 (GLVS…SLIL), 131–151 (LAIL…WTFI), 155–175 (FIQI…FVYV), and 319–339 (SLGP…FYIF). Residues Lys346, Arg350, Leu373, Trp378, and 385-386 (NY) contribute to the NADP(+) site. Residues 431–451 (AKGWGMLITYFYILYFAILLI) traverse the membrane as a helical segment. NADP(+)-binding positions include Asp457, 461 to 465 (CHRKY), and Tyr472.

The protein belongs to the ERG4/ERG24 family.

It localises to the membrane. The enzyme catalyses 4,4-dimethyl-5alpha-cholesta-8,24-dien-3beta-ol + NADP(+) = 4,4-dimethyl-5alpha-cholesta-8,14,24-trien-3beta-ol + NADPH + H(+). It participates in steroid biosynthesis; zymosterol biosynthesis; zymosterol from lanosterol: step 2/6. Functionally, reduces the C14=C15 double bond of 4,4-dimethyl-cholesta-8,14,24-trienol to produce 4,4-dimethyl-cholesta-8,24-dienol. In Fusarium vanettenii (Neocosmospora pisi), this protein is Delta(14)-sterol reductase.